The primary structure comprises 307 residues: Undecaprenyl-diphosphatase (307 aa).

The next 6 membrane-spanning stretches (helical) occupy residues 40–60 (AAKTLDIVIQLGAVLAVVVYF), 79–99 (LRLALALAFAFLPAAVVGLLF), 107–127 (LFGPGPVAAALIVGGFLMIGV), 183–203 (AAAAEFSFLLAIPTLGAATVF), 219–239 (IVALVVGLAVSFAVALLVIAV), and 249–269 (LAPFGWYRIALGALVLWLWIA).

This sequence belongs to the UppP family.

It localises to the cell inner membrane. The catalysed reaction is di-trans,octa-cis-undecaprenyl diphosphate + H2O = di-trans,octa-cis-undecaprenyl phosphate + phosphate + H(+). Catalyzes the dephosphorylation of undecaprenyl diphosphate (UPP). Confers resistance to bacitracin. This Sorangium cellulosum (strain So ce56) (Polyangium cellulosum (strain So ce56)) protein is Undecaprenyl-diphosphatase.